The sequence spans 520 residues: Bifunctional dihydrofolate reductase-thymidylate synthase (520 aa).

Positions 26 to 229 (AFSIVVALDM…LEFEICKYVP (204 aa)) constitute a DHFR domain. Val-30 lines the substrate pocket. Residues Ala-32 and 38–44 (GIGDGES) contribute to the NADP(+) site. Asp-52 is a binding site for substrate. Residues 81–83 (RKT), 102–105 (LSSK), and 157–164 (GGAQVYAD) each bind NADP(+). The substrate site is built by Tyr-162 and Thr-180. The interval 234–520 (ERQYLELIDR…HPAIKMEMAV (287 aa)) is thymidylate synthase. Arg-254 is a dUMP binding site. Cys-400 is a catalytic residue. DUMP is bound by residues His-401, 421–425 (QRSCD), Asn-433, and 463–465 (HVY).

It in the N-terminal section; belongs to the dihydrofolate reductase family. The protein in the C-terminal section; belongs to the thymidylate synthase family.

It catalyses the reaction (6S)-5,6,7,8-tetrahydrofolate + NADP(+) = 7,8-dihydrofolate + NADPH + H(+). The enzyme catalyses dUMP + (6R)-5,10-methylene-5,6,7,8-tetrahydrofolate = 7,8-dihydrofolate + dTMP. It participates in cofactor biosynthesis; tetrahydrofolate biosynthesis; 5,6,7,8-tetrahydrofolate from 7,8-dihydrofolate: step 1/1. In terms of biological role, bifunctional enzyme. Involved in de novo dTMP biosynthesis. Key enzyme in folate metabolism. Catalyzes an essential reaction for de novo glycine and purine synthesis, DNA precursor synthesis, and for the conversion of dUMP to dTMP. The polypeptide is Bifunctional dihydrofolate reductase-thymidylate synthase (Leishmania major).